The sequence spans 706 residues: Double-strand break repair protein MRE11 (706 aa).

N-acetylserine is present on Ser-2. Ser-2 bears the Phosphoserine mark. Asp-20, His-22, and Asp-60 together coordinate Mn(2+). The interaction with NBN stretch occupies residues 87 to 117; sequence RPVQFEVISDQSVNFGFSKFPWVNYQDGNLN. Asn-128 is a binding site for Mn(2+). His-129 serves as the catalytic Proton donor. Residues His-217, His-245, and His-247 each coordinate Mn(2+). Residue Lys-255 forms a Glycyl lysine isopeptide (Lys-Gly) (interchain with G-Cter in SUMO2) linkage. Phosphoserine is present on Ser-275. Lys-282 participates in a covalent cross-link: Glycyl lysine isopeptide (Lys-Gly) (interchain with G-Cter in UFM1). Residue Lys-339 forms a Glycyl lysine isopeptide (Lys-Gly) (interchain with G-Cter in ubiquitin) linkage. Residues Lys-384 and Lys-468 each participate in a glycyl lysine isopeptide (Lys-Gly) (interchain with G-Cter in SUMO) cross-link. Residue Lys-481 forms a Glycyl lysine isopeptide (Lys-Gly) (interchain with G-Cter in ubiquitin) linkage. Residues 505–514 show a composition bias toward basic and acidic residues; that stretch reads FRESRQRNTN. Residues 505 to 706 are disordered; it reads FRESRQRNTN…SSSCPRRNRR (202 aa). Over residues 531 to 541 the composition is skewed to polar residues; that stretch reads RSQSETSTSAF. Residues 569 to 579 show a composition bias toward basic residues; it reads GRGRGRGRRGA. Asymmetric dimethylarginine is present on residues Arg-570, Arg-572, Arg-574, Arg-576, Arg-577, Arg-580, Arg-587, Arg-592, and Arg-594. The GAR signature appears at 570-594; it reads RGRGRGRRGARGQSSAPRGGSQRGR. Over residues 580-589 the composition is skewed to low complexity; sequence RGQSSAPRGG. Residues 603–617 are compositionally biased toward polar residues; the sequence is RGRSSKATSSTSRNM. Ser-618, Ser-640, and Ser-648 each carry phosphoserine. The span at 643 to 653 shows a compositional bias: acidic residues; it reads IEVDDSDEDDI. Residues 655 to 679 show a composition bias toward polar residues; sequence PTNSRADQRWSGTTSSKRMSQSQTA. N6-lactoyllysine is present on Lys-671. Ser-674, Ser-676, Ser-686, and Ser-699 each carry phosphoserine. Residues 684-694 show a composition bias toward acidic residues; sequence FESDEDDDDDP.

The protein belongs to the MRE11/RAD32 family. In terms of assembly, component of the MRN complex composed of two heterodimers RAD50 and MRE11 associated with a single NBN. The MRN complexes dimerize on DNA to form joined MRN-MRN oligomers required for DNA double-strand break repair. As part of the MRN complex, interacts with MCM9; the interaction recruits the complex to DNA repair sites. Component of the BASC complex, at least composed of BRCA1, MSH2, MSH6, MLH1, ATM, BLM, RAD50, MRE11 and NBN. Found in a complex with TERF2. Interacts with DCLRE1C/Artemis and DCLRE1B/Apollo. Interacts with ATF2. Interacts with EXD2. Interacts with MRNIP. Interacts with SAMHD1; leading to stimulate 3'-5' exonuclease activity. Interacts (when ubiquitinated) with UBQLN4 (via its UBA domain). Interacts with CYREN (via XLF motif). Interacts with GFI1; promoting methylation by PRMT1. Interacts with DYNLL1; inhibiting the activity of MRE11. Interacts with C1QBP and RAD50; interaction takes place in absence of DNA damage to form the MRC (MRE11-RAD50-C1QBP) complex that inhibits the activity of MRE11. Interacts with AGER/RAGE; AGER is recruited to DNA double-strand break sites where it enhances MRE11 endonuclease activity to promote DNA repair. Mn(2+) serves as cofactor. Post-translationally, phosphorylated by ATM at Ser-674 and Ser-676 in response to DNA damage, promoting MRE11 activity: phosphorylation activates MRE11 by preventing the interaction between MRE11 and the C1QBP inhibitor. Phosphorylation at Ser-648 by PLK1 primes for phosphorylation at Ser-686 by CK2, inhibiting recruitment of the MRN complex to DNA damage sites. In terms of processing, asymmetric dimethylation by PRMT1 promotes MRE11 exonuclease activity. Lactylation at Lys-671 by CREBBP/CBP in response to DNA damage promotes DNA binding and MRE11 activity. Post-translationally, acetylated on lysine residues by KAT2A /GCN5. In terms of processing, ubiquitinated following DNA damage. Ubiquitination triggers interaction with UBQLN4, leading to MRE11 removal from chromatin and degradation by the proteasome. Ubiquitinated at Lys-339 and Lys-481 by RNF126 via 'Lys-27'- and 'Lys-29'-linked polyubiquitin chains, promoting the exonuclease activity of MRE11. SUMOylated by PIAS1, stabilizing MRE11 on chromatin during end resection. DeSUMOylated by SENP3 following removal from DNA double-strand breaks (DSBs). Post-translationally, ufmylation at Lys-282 promotes MRE11 activity and is required for activation of the ATM and ATR kinases by the MRN complex.

It is found in the nucleus. It localises to the chromosome. The protein resides in the telomere. With respect to regulation, interaction with SAMHD1 stimulates the double-strand-specific 3'-5' exonuclease activity. RBBP8/CtIP specifically promotes the endonuclease activity to clear protein-DNA adducts and generate clean double-strand break ends. DYNLL1-binding inhibits the activity of MRE11. MRE11 activity is inhibited by C1QBP: in absence of DNA damage, C1QBP interacts with unphosphorylated MRE11, preventing formation and activity of the MRN complex. In terms of biological role, core component of the MRN complex, which plays a central role in double-strand break (DSB) repair, DNA recombination, maintenance of telomere integrity and meiosis. The MRN complex is involved in the repair of DNA double-strand breaks (DSBs) via homologous recombination (HR), an error-free mechanism which primarily occurs during S and G2 phases. The complex (1) mediates the end resection of damaged DNA, which generates proper single-stranded DNA, a key initial steps in HR, and is (2) required for the recruitment of other repair factors and efficient activation of ATM and ATR upon DNA damage. Within the MRN complex, MRE11 possesses both single-strand endonuclease activity and double-strand-specific 3'-5' exonuclease activity. After DSBs, MRE11 is loaded onto DSBs sites and cleaves DNA by cooperating with RBBP8/CtIP to initiate end resection. MRE11 first endonucleolytically cleaves the 5' strand at DNA DSB ends to prevent non-homologous end joining (NHEJ) and licence HR. It then generates a single-stranded DNA gap via 3' to 5' exonucleolytic degradation to create entry sites for EXO1- and DNA2-mediated 5' to 3' long-range resection, which is required for single-strand invasion and recombination. RBBP8/CtIP specifically promotes the endonuclease activity of MRE11 to clear protein-DNA adducts and generate clean double-strand break ends. MRE11 endonuclease activity is also enhanced by AGER/RAGE. The MRN complex is also required for DNA damage signaling via activation of the ATM and ATR kinases: the nuclease activity of MRE11 is not required to activate ATM and ATR. The MRN complex is also required for the processing of R-loops. The MRN complex is involved in the activation of the cGAS-STING pathway induced by DNA damage during tumorigenesis: the MRN complex acts by displacing CGAS from nucleosome sequestration, thereby activating it. In telomeres the MRN complex may modulate t-loop formation. This Mus musculus (Mouse) protein is Double-strand break repair protein MRE11.